The primary structure comprises 347 residues: Quinolinate synthase (347 aa).

Residues H47 and S68 each contribute to the iminosuccinate site. Position 113 (C113) interacts with [4Fe-4S] cluster. Iminosuccinate contacts are provided by residues 139–141 (YAN) and S156. A [4Fe-4S] cluster-binding site is contributed by C200. Iminosuccinate contacts are provided by residues 226–228 (HPE) and T243. A [4Fe-4S] cluster-binding site is contributed by C297.

The protein belongs to the quinolinate synthase family. Type 1 subfamily. The cofactor is [4Fe-4S] cluster.

It is found in the cytoplasm. The enzyme catalyses iminosuccinate + dihydroxyacetone phosphate = quinolinate + phosphate + 2 H2O + H(+). It participates in cofactor biosynthesis; NAD(+) biosynthesis; quinolinate from iminoaspartate: step 1/1. Its function is as follows. Catalyzes the condensation of iminoaspartate with dihydroxyacetone phosphate to form quinolinate. The protein is Quinolinate synthase of Salmonella agona (strain SL483).